Reading from the N-terminus, the 648-residue chain is Sodium/nucleoside cotransporter 1 (648 aa).

Topologically, residues 1-83 are cytoplasmic; that stretch reads MADDTPRQRE…LCREHWQLFE (83 aa). Residues 84–104 traverse the membrane as a helical segment; it reads WISKGLLSTAYIGFLIVACLL. The Extracellular portion of the chain corresponds to 105–108; that stretch reads DFPR. A helical transmembrane segment spans residues 109–129; it reads ALALFVITCVVLVFLAYNLLK. At 130–147 the chain is on the cytoplasmic side; sequence RLLGSKLKKCVKFQGHSC. The chain crosses the membrane as a helical span at residues 148–168; that stretch reads LSLWLKRGLALAAGLGVILWL. At 169 to 175 the chain is on the extracellular side; it reads SLDTAQR. The chain crosses the membrane as a helical span at residues 176–196; it reads PEQLVSFAGICVFLVLLFAGS. At 197-201 the chain is on the cytoplasmic side; that stretch reads KHHRA. The chain crosses the membrane as a helical span at residues 202-222; it reads VSWRAVSWGLGLQFVLGLFVI. Over 223–265 the chain is Extracellular; it reads RTEPGFVAFQWLGDQIRVFLSYTEAGSSFVFGEALVKDVFAFQ. A helical transmembrane segment spans residues 266–286; sequence VLPIIVFFSCVMSVLYYLGLM. The Cytoplasmic portion of the chain corresponds to 287–294; the sequence is QWVILKIA. Residues 295–318 traverse the membrane as a helical segment; the sequence is WLMQVTMGTSATETLSVAGNIFVS. Residues 319–339 are Extracellular-facing; it reads QTEAPLLIRPYLADMTLSEVH. A helical membrane pass occupies residues 340-360; the sequence is VVMTGGYATIAGSLLGAYISF. Residue G361 is a topological domain, cytoplasmic. The helical transmembrane segment at 362–380 threads the bilayer; sequence IDASSLIAASVMAAPCALA. Residues 381–427 are Extracellular-facing; sequence LSKLVYPEVEESKFRSEEGVKLTYGDAQNLVEAASAGAAISVKVVAN. The chain crosses the membrane as a helical span at residues 428 to 448; the sequence is IAANLIAFLAVLAFINAALSW. The Cytoplasmic segment spans residues 449–470; sequence LGDMVDIQGLSFQLICSYVLRP. A helical membrane pass occupies residues 471–491; sequence VAFLMGVAWEDCPVVAELLGI. At 492-531 the chain is on the extracellular side; sequence KLFLNEFVAYQELSQYKQRRLAGAEEWLGDKKQWISVRAE. A helical transmembrane segment spans residues 532–552; sequence ILTTYALCGFANFSSIGIMLG. The Cytoplasmic portion of the chain corresponds to 553–571; that stretch reads GLTSMVPQRRSDFSQIVLR. The chain crosses the membrane as a helical span at residues 572-592; it reads ALITGAFVSLVNACVAGILYV. The Extracellular portion of the chain corresponds to 593 to 648; that stretch reads PRGVEVDCMSLLNQTVSSSSFEVYLCCRQVFQNTSLEFGQEALHNCCRFYNHTVCT. N605, N625, and N643 each carry an N-linked (GlcNAc...) asparagine glycan.

This sequence belongs to the concentrative nucleoside transporter (CNT) (TC 2.A.41) family. Post-translationally, N-glycosylated. N-glycosylation is required for localization to the plasma membrane and the transporter activity.

Its subcellular location is the cell membrane. It localises to the apical cell membrane. The enzyme catalyses uridine(out) + Na(+)(out) = uridine(in) + Na(+)(in). The catalysed reaction is thymidine(out) + Na(+)(out) = thymidine(in) + Na(+)(in). It carries out the reaction cytidine(out) + Na(+)(out) = cytidine(in) + Na(+)(in). It catalyses the reaction adenosine(out) + Na(+)(out) = adenosine(in) + Na(+)(in). Due to its high apparent affinity but slow transport, adenosine could act as a negative regulator of pyrimidine transport under some conditions. Functionally, sodium and pyrimidine nucleoside symporter of the plasma membrane that imports uridine, thymidine and cytidine into cells by coupling their transport to the transmembrane sodium electrochemical gradient. Also transports adenosine, an atypical substrate transported with high apparent affinity, but low maximum velocity. Therefore, exhibits the transport characteristics of the nucleoside transport system cit or N2 subtype (N2/cit). Involved in renal nucleoside (re)absorption. The polypeptide is Sodium/nucleoside cotransporter 1 (Mus musculus (Mouse)).